Here is a 332-residue protein sequence, read N- to C-terminus: Ketol-acid reductoisomerase (NAD(+)) (332 aa).

The region spanning Met1–Cys186 is the KARI N-terminal Rossmann domain. NAD(+) contacts are provided by residues Tyr24–Gln27, Glu46, Asn55, Ser57, and Asp87–Gln90. His112 is an active-site residue. Position 138 (Gly138) interacts with NAD(+). The KARI C-terminal knotted domain occupies Thr187–Lys332. The Mg(2+) site is built by Asp195, Glu199, Glu231, and Glu235. Ser256 provides a ligand contact to substrate.

It belongs to the ketol-acid reductoisomerase family. In terms of assembly, homodimer. Mg(2+) serves as cofactor.

It catalyses the reaction (2R)-2,3-dihydroxy-3-methylbutanoate + NAD(+) = (2S)-2-acetolactate + NADH + H(+). It functions in the pathway amino-acid biosynthesis; L-isoleucine biosynthesis; L-isoleucine from 2-oxobutanoate: step 2/4. Its pathway is amino-acid biosynthesis; L-valine biosynthesis; L-valine from pyruvate: step 2/4. Involved in the biosynthesis of branched-chain amino acids (BCAA). Catalyzes an alkyl-migration followed by a ketol-acid reduction of (S)-2-acetolactate (S2AL) to yield (R)-2,3-dihydroxy-isovalerate. In the isomerase reaction, S2AL is rearranged via a Mg-dependent methyl migration to produce 3-hydroxy-3-methyl-2-ketobutyrate (HMKB). In the reductase reaction, this 2-ketoacid undergoes a metal-dependent reduction by NADH to yield (R)-2,3-dihydroxy-isovalerate. The chain is Ketol-acid reductoisomerase (NAD(+)) from Uncultured archaeon GZfos26G2.